Here is a 688-residue protein sequence, read N- to C-terminus: Putative proline--tRNA ligase YHR020W (688 aa).

A Phosphoserine modification is found at S149. Position 170 is a phosphothreonine (T170). Residues 631–650 (ESSAKKDDGEEFEEDDKAPS) form a disordered region. S655 is modified (phosphoserine).

This sequence belongs to the class-II aminoacyl-tRNA synthetase family.

It catalyses the reaction tRNA(Pro) + L-proline + ATP = L-prolyl-tRNA(Pro) + AMP + diphosphate. The protein is Putative proline--tRNA ligase YHR020W of Saccharomyces cerevisiae (strain ATCC 204508 / S288c) (Baker's yeast).